Reading from the N-terminus, the 552-residue chain is Cycloheximide resistance protein (552 aa).

Positions 46–70 (VLNSSDKSQSSENKEQTEGDQATIQ) are disordered. Over residues 47–56 (LNSSDKSQSS) the composition is skewed to polar residues. The next 12 membrane-spanning stretches (helical) occupy residues 100-120 (AIAA…SAIY), 137-157 (LATL…LFWS), 168-188 (TPLY…TALS), 194-213 (LSVL…STGG), 225-246 (YSIA…GPLI), 262-282 (WSFW…SFSL), 346-362 (IYIA…FESV), 381-399 (YVST…LPTV), 419-439 (LPPA…FGWT), 445-464 (NWFV…FIIF), 477-494 (VEYL…RSVS), and 518-539 (WGSS…FFYL).

The protein belongs to the major facilitator superfamily. CAR1 family.

It is found in the membrane. Functionally, probable transporter. Confers resistance to cycloheximide. The chain is Cycloheximide resistance protein (CYHR) from Candida maltosa (Yeast).